Consider the following 169-residue polypeptide: Protein AIG2 B (169 aa).

A substrate-binding site is contributed by 15–20 (YGSFQE). Residue glutamate 83 is the Proton acceptor of the active site.

It belongs to the gamma-glutamylcyclotransferase family. Expressed in roots, leaves and stems.

Putative gamma-glutamylcyclotransferase. The chain is Protein AIG2 B from Arabidopsis thaliana (Mouse-ear cress).